A 306-amino-acid chain; its full sequence is UDP-3-O-acyl-N-acetylglucosamine deacetylase (306 aa).

3 residues coordinate Zn(2+): histidine 79, histidine 238, and aspartate 242. Histidine 265 acts as the Proton donor in catalysis.

It belongs to the LpxC family. It depends on Zn(2+) as a cofactor.

It catalyses the reaction a UDP-3-O-[(3R)-3-hydroxyacyl]-N-acetyl-alpha-D-glucosamine + H2O = a UDP-3-O-[(3R)-3-hydroxyacyl]-alpha-D-glucosamine + acetate. The protein operates within glycolipid biosynthesis; lipid IV(A) biosynthesis; lipid IV(A) from (3R)-3-hydroxytetradecanoyl-[acyl-carrier-protein] and UDP-N-acetyl-alpha-D-glucosamine: step 2/6. Catalyzes the hydrolysis of UDP-3-O-myristoyl-N-acetylglucosamine to form UDP-3-O-myristoylglucosamine and acetate, the committed step in lipid A biosynthesis. The protein is UDP-3-O-acyl-N-acetylglucosamine deacetylase of Yersinia pseudotuberculosis serotype O:1b (strain IP 31758).